The following is a 395-amino-acid chain: 1-deoxy-D-xylulose 5-phosphate reductoisomerase (395 aa).

5 residues coordinate NADPH: Thr-10, Gly-11, Ser-12, Ile-13, and Asn-123. Lys-124 is a binding site for 1-deoxy-D-xylulose 5-phosphate. Glu-125 contacts NADPH. Asp-149 contributes to the Mn(2+) binding site. 1-deoxy-D-xylulose 5-phosphate contacts are provided by Ser-150, Glu-151, Ser-185, and His-208. Glu-151 contacts Mn(2+). NADPH is bound at residue Gly-214. 1-deoxy-D-xylulose 5-phosphate-binding residues include Ser-221, Asn-226, Lys-227, and Glu-230. A Mn(2+)-binding site is contributed by Glu-230.

It belongs to the DXR family. Requires Mg(2+) as cofactor. Mn(2+) is required as a cofactor.

The enzyme catalyses 2-C-methyl-D-erythritol 4-phosphate + NADP(+) = 1-deoxy-D-xylulose 5-phosphate + NADPH + H(+). The protein operates within isoprenoid biosynthesis; isopentenyl diphosphate biosynthesis via DXP pathway; isopentenyl diphosphate from 1-deoxy-D-xylulose 5-phosphate: step 1/6. In terms of biological role, catalyzes the NADPH-dependent rearrangement and reduction of 1-deoxy-D-xylulose-5-phosphate (DXP) to 2-C-methyl-D-erythritol 4-phosphate (MEP). This is 1-deoxy-D-xylulose 5-phosphate reductoisomerase from Shewanella sediminis (strain HAW-EB3).